Reading from the N-terminus, the 233-residue chain is Ribosomal RNA-processing protein 14-C (233 aa).

Residues 32–65 (DRALLLQRRKEKAKARAEAKKLAKKESKAKQESK) are a coiled coil. Residues 47–64 (RAEAKKLAKKESKAKQES) show a composition bias toward basic and acidic residues. Disordered stretches follow at residues 47 to 87 (RAEA…DNHK), 130 to 149 (KRRI…ESDK), and 164 to 233 (DNEQ…SKKK). A Phosphoserine modification is found at Ser-75. Residues 122–223 (ALKHLEAKKR…ESKKSKKGKA (102 aa)) are a coiled coil. 2 stretches are compositionally biased toward basic and acidic residues: residues 133–149 (IESM…ESDK) and 180–209 (KKKS…EENL). Positions 210-233 (KKRRESKKSKKGKAPKKKKPSKKK) are enriched in basic residues.

It belongs to the SURF6 family. As to quaternary structure, component of the 90S and 60S pre-ribosomal particles.

It localises to the nucleus. The protein localises to the nucleolus. Its function is as follows. Involved in ribosome biogenesis and cell polarity. Required for the synthesis of both 40S and 60S ribosomal subunits and may also play some direct role in correct positioning of the mitotic spindle during mitosis. The polypeptide is Ribosomal RNA-processing protein 14-C (rrp14c) (Schizosaccharomyces pombe (strain 972 / ATCC 24843) (Fission yeast)).